The following is a 431-amino-acid chain: Salivary plasminogen activator beta (431 aa).

Residues 1–36 (MVNTMKTKLLCVLLLCGAVFSLPRQETYRQLARGSR) form the signal peptide. The region spanning 37–75 (AYGGCSELRCFNGGTCWQAASFSDFVCQCPKGYTGKQCE) is the EGF-like domain. 12 disulfides stabilise this stretch: Cys-41-Cys-52, Cys-46-Cys-63, Cys-65-Cys-74, Cys-82-Cys-163, Cys-103-Cys-145, Cys-134-Cys-158, Cys-168-Cys-299, Cys-211-Cys-227, Cys-219-Cys-288, Cys-313-Cys-388, Cys-345-Cys-361, and Cys-378-Cys-406. A Kringle domain is found at 82-163 (CYKDQGVTYR…ILEFCSVPVC (82 aa)). Asn-139 carries an N-linked (GlcNAc...) asparagine glycan. Residues 180–430 (STGGLFTDIT…YLGWIRDNMR (251 aa)) form the Peptidase S1 domain. Active-site charge relay system residues include His-226 and Asp-275. The N-linked (GlcNAc...) asparagine glycan is linked to Asn-352. Ser-382 serves as the catalytic Charge relay system.

Belongs to the peptidase S1 family. As to quaternary structure, monomer.

The protein localises to the secreted. It carries out the reaction Specific cleavage of Arg-|-Val bond in plasminogen to form plasmin.. Probably essential to support the feeding habits of this exclusively haematophagous animal. Probable potent thrombolytic agent. The sequence is that of Salivary plasminogen activator beta from Desmodus rotundus (Vampire bat).